A 184-amino-acid polypeptide reads, in one-letter code: Small ribosomal subunit protein eS8 (184 aa).

The disordered stretch occupies residues 1 to 23 (MGISRDSRHKRRLTGGRYPVHKK). A compositionally biased stretch (basic residues) spans 7-23 (SRHKRRLTGGRYPVHKK).

It belongs to the eukaryotic ribosomal protein eS8 family.

The protein is Small ribosomal subunit protein eS8 (RPS8) of Theileria annulata.